We begin with the raw amino-acid sequence, 417 residues long: Mitochondrial tRNA-specific 2-thiouridylase 1 (417 aa).

ATP is bound by residues 32-39 (AMSSGVDS) and Met-58. The segment at 122–124 (NPD) is interaction with target base in tRNA. Catalysis depends on Cys-127, which acts as the Nucleophile. Residues Cys-127 and Cys-229 are joined by a disulfide bond. Residue Gly-154 participates in ATP binding. An interaction with tRNA region spans residues 179–181 (KDQ). Cys-229 acts as the Cysteine persulfide intermediate in catalysis. The tract at residues 354-355 (RS) is interaction with tRNA.

This sequence belongs to the MnmA/TRMU family.

The protein resides in the mitochondrion. The enzyme catalyses 5-taurinomethyluridine(34) in tRNA + S-sulfanyl-L-cysteinyl-[protein] + AH2 + ATP = 5-taurinomethyl-2-thiouridine(34) in tRNA + L-cysteinyl-[protein] + A + AMP + diphosphate + H(+). Catalyzes the 2-thiolation of uridine at the wobble position (U34) of mitochondrial tRNA(Lys), tRNA(Glu) and tRNA(Gln). Required for the formation of 5-taurinomethyl-2-thiouridine (tm5s2U) of mitochondrial tRNA(Lys), tRNA(Glu), and tRNA(Gln) at the wobble position. ATP is required to activate the C2 atom of the wobble base. This is Mitochondrial tRNA-specific 2-thiouridylase 1 (SLM3) from Saccharomyces cerevisiae (strain ATCC 204508 / S288c) (Baker's yeast).